Reading from the N-terminus, the 518-residue chain is Arginyl-tRNA--protein transferase 1 (518 aa).

Positions 149–165 are enriched in basic and acidic residues; that stretch reads ESLQSEGKNSKKEEPHE. The tract at residues 149 to 207 is disordered; that stretch reads ESLQSEGKNSKKEEPHELLQSQDSVGEKLGSGEPSHSVKVHTVPKPGKGADLSKPPCRK. Phosphoserine is present on Ser169.

The protein belongs to the R-transferase family. In terms of assembly, monomer. Interacts with LIAT1; LIAT1 is not a substrate of ATE1, the interaction takes place in the cytoplasm and seems to increase ATE1 arginyltransferase activity.

Its subcellular location is the nucleus. The protein localises to the cytoplasm. The enzyme catalyses an N-terminal L-alpha-aminoacyl-[protein] + L-arginyl-tRNA(Arg) = an N-terminal L-arginyl-L-aminoacyl-[protein] + tRNA(Arg) + H(+). Involved in the post-translational conjugation of arginine to the N-terminal aspartate or glutamate of a protein. This arginylation is required for degradation of the protein via the ubiquitin pathway. Does not arginylate cysteine residues. This is Arginyl-tRNA--protein transferase 1 (ATE1) from Macaca fascicularis (Crab-eating macaque).